We begin with the raw amino-acid sequence, 420 residues long: Phosphoribosylamine--glycine ligase (420 aa).

Positions 108-314 (KEIMVKYGVS…FAQNITDILD (207 aa)) constitute an ATP-grasp domain. 134–195 (IEKHGAPIVV…EEFLEGEEFS (62 aa)) provides a ligand contact to ATP. Positions 284 and 286 each coordinate Mg(2+).

Belongs to the GARS family. Mg(2+) is required as a cofactor. The cofactor is Mn(2+).

The catalysed reaction is 5-phospho-beta-D-ribosylamine + glycine + ATP = N(1)-(5-phospho-beta-D-ribosyl)glycinamide + ADP + phosphate + H(+). Its pathway is purine metabolism; IMP biosynthesis via de novo pathway; N(1)-(5-phospho-D-ribosyl)glycinamide from 5-phospho-alpha-D-ribose 1-diphosphate: step 2/2. This is Phosphoribosylamine--glycine ligase from Streptococcus pneumoniae (strain ATCC BAA-255 / R6).